We begin with the raw amino-acid sequence, 432 residues long: Cyclin-A2 (432 aa).

Met1 carries the N-acetylmethionine modification. Phosphoserine is present on Ser5. Disordered stretches follow at residues 26–45 (LQED…QQPR) and 55–75 (SGNP…VAPL). Ser55 is subject to Phosphoserine.

This sequence belongs to the cyclin family. Cyclin AB subfamily. Interacts with the CDK1 and CDK2 protein kinases to form serine/threonine kinase holoenzyme complexes. Interacts with CDK1 (hyperphosphorylated form in G1 and underphosphorylated forms in S and G2). Interacts with CDK2; the interaction increases from G1 to G2. Interacts (associated with CDK2 but not with CDK1) with SCAPER; regulates the activity of CCNA2/CDK2 by transiently maintaining CCNA2 in the cytoplasm. Forms a ternary complex with CDK2 and CDKN1B; CDKN1B inhibits the kinase activity of CDK2 through conformational rearrangements. Interacts with INCA1. In terms of assembly, (Microbial infection) Interacts with human cytomegalovirus protein UL32. Post-translationally, polyubiquitinated via 'Lys-11'-linked ubiquitin by the anaphase-promoting complex (APC/C), leading to its degradation by the proteasome. Deubiquitinated and stabilized by USP37 enables entry into S phase. Ubiquitinated during the G1 phase by the SCF(FBXO31) complex, leading to its proteasomal degradation.

The protein resides in the nucleus. The protein localises to the cytoplasm. Its function is as follows. Cyclin which controls both the G1/S and the G2/M transition phases of the cell cycle. Functions through the formation of specific serine/threonine protein kinase holoenzyme complexes with the cyclin-dependent protein kinases CDK1 or CDK2. The cyclin subunit confers the substrate specificity of these complexes and differentially interacts with and activates CDK1 and CDK2 throughout the cell cycle. This is Cyclin-A2 from Homo sapiens (Human).